The following is a 236-amino-acid chain: Ubiquinone biosynthesis O-methyltransferase (236 aa).

4 residues coordinate S-adenosyl-L-methionine: R39, G59, D80, and M124.

It belongs to the methyltransferase superfamily. UbiG/COQ3 family.

The catalysed reaction is a 3-demethylubiquinol + S-adenosyl-L-methionine = a ubiquinol + S-adenosyl-L-homocysteine + H(+). The enzyme catalyses a 3-(all-trans-polyprenyl)benzene-1,2-diol + S-adenosyl-L-methionine = a 2-methoxy-6-(all-trans-polyprenyl)phenol + S-adenosyl-L-homocysteine + H(+). It functions in the pathway cofactor biosynthesis; ubiquinone biosynthesis. Functionally, O-methyltransferase that catalyzes the 2 O-methylation steps in the ubiquinone biosynthetic pathway. The protein is Ubiquinone biosynthesis O-methyltransferase of Shewanella sp. (strain MR-4).